Consider the following 394-residue polypeptide: Putative transporter AraJ (394 aa).

Residues 1–4 (MKKV) are Cytoplasmic-facing. The chain crosses the membrane as a helical span at residues 5–27 (ILSLALGTFGLGMAEFGIMGVLT). The Periplasmic portion of the chain corresponds to 28 to 41 (ELAHNVGISIPAAG). Residues 42–63 (HMISYYALGVVVGAPIIALFSS) traverse the membrane as a helical segment. Residues 64 to 69 (RYSLKH) lie on the Cytoplasmic side of the membrane. A helical membrane pass occupies residues 70-89 (ILLFLVALCVIGNAMFTLSS). The Periplasmic portion of the chain corresponds to 90–93 (SYLM). A helical membrane pass occupies residues 94 to 116 (LAIGRLVSGFPHGAFFGVGAIVL). At 117 to 128 (SKIIKPGKVTAA) the chain is on the cytoplasmic side. The helical transmembrane segment at 129–151 (VAGMVSGMTVANLLGIPLGTYLS) threads the bilayer. The Periplasmic segment spans residues 152–155 (QEFS). The chain crosses the membrane as a helical span at residues 156-178 (WRYTFLLIAVFNIAVMASVYFWV). Over 179–198 (PDIRDEAKGNLREQFHFLRS) the chain is Cytoplasmic. The chain crosses the membrane as a helical span at residues 199–221 (PAPWLIFAATMFGNAGVFAWFSY). Residues 222–235 (VKPYMMFISGFSET) lie on the Periplasmic side of the membrane. A helical transmembrane segment spans residues 236-255 (AMTFIMMLVGLGMVLGNMLS). Topologically, residues 256–261 (GRISGR) are cytoplasmic. Residues 262 to 284 (YSPLRIAAVTDFIIVLALLMLFF) traverse the membrane as a helical segment. Residues 285–293 (CGGMKTTSL) lie on the Periplasmic side of the membrane. A helical transmembrane segment spans residues 294–316 (IFAFICCAGLFALSAPLQILLLQ). Residues 317–322 (NAKGGE) are Cytoplasmic-facing. The helical transmembrane segment at 323-342 (LLGAAGGQIAFNLGSAVGAY) threads the bilayer. Topologically, residues 343-351 (CGGMMLTLG) are periplasmic. A helical membrane pass occupies residues 352 to 374 (LAYNYVALPAALLSFAAMSSLLL). Residues 375 to 394 (YGRYKRQQAADTPVLAKPLG) are Cytoplasmic-facing.

Belongs to the major facilitator superfamily.

Its subcellular location is the cell inner membrane. Its function is as follows. May be involved in either the transport or processing of arabinose polymers. This chain is Putative transporter AraJ (araJ), found in Escherichia coli (strain K12).